Here is a 22-residue protein sequence, read N- to C-terminus: Mu-conotoxin CnIIIC (22 aa).

Glutamine 1 is subject to Pyrrolidone carboxylic acid; partial. 3 disulfide bridges follow: cysteine 3/cysteine 15, cysteine 4/cysteine 21, and cysteine 10/cysteine 22. Cysteine 22 carries the post-translational modification Cysteine amide.

The protein belongs to the conotoxin M superfamily. In terms of tissue distribution, expressed by the venom duct.

The protein resides in the secreted. Mu-conotoxins block voltage-gated sodium channels (Nav). This synthetic toxin blocks both voltage-gated sodium channels and nicotinic acetylcholine receptor (nAChR). Inhibits the skeletal muscle rNav1.4/SCN4A (IC(50)=1.3 nM) and the brain rNav1.2/SCN2A in a long-lasting manner. A low inhibition is also observed on neuronal mNav1.6/SCN8A and mNav1.7/SCN9A. Modestly blocks nAChR alpha-3/beta-2 subtype (IC(50)=450 nM) (partially reversible) and, to a lesser extent, alpha-7 and alpha-4/beta-2 subtypes (reversible). In vitro, decreases twitch tension in mouse hemidiaphragms (IC(50)=150 nM), and displays a high blocking effect in mouse extensor digitorum longus muscles (IC(50)=46 nM). In Conus consors (Singed cone), this protein is Mu-conotoxin CnIIIC.